A 473-amino-acid polypeptide reads, in one-letter code: Cannabinoid receptor 1 (473 aa).

At 1-118 (MKSILDGLAD…CFMILNPSQQ (118 aa)) the chain is on the extracellular side. The tract at residues 2-23 (KSILDGLADTTFRTITTDLLYV) is required for mitochondrial localization. N-linked (GlcNAc...) asparagine glycans are attached at residues Asn-79 and Asn-85. The chain crosses the membrane as a helical span at residues 119–144 (LAIAVLSLTLGTFTVLENLLVLCVIL). Residues 145-156 (HSRSLRCRPSYH) are Cytoplasmic-facing. The chain crosses the membrane as a helical span at residues 157-177 (FIGSLAVADLLGSVIFVYSFV). Residues 178–189 (DFHVFHRKDSPN) are Extracellular-facing. Residues 190 to 214 (VFLFKLGGVTASFTASVGSLFLTAI) form a helical membrane-spanning segment. Topologically, residues 215–234 (DRYISIHRPLAYKRIVTRPK) are cytoplasmic. Residues 235–257 (AVVAFCVMWTIAIVIAVLPLLGW) traverse the membrane as a helical segment. At 258–275 (NCKKLNSVCSDIFPLIDE) the chain is on the extracellular side. Residues 276–301 (TYLMFWIGVTSILLLFIVYAYMYILW) traverse the membrane as a helical segment. Residues 302-346 (KAHSHAVRMLQRGTQKSIIIQSTEDGKVQITRPDQTRMDIRLAKT) lie on the Cytoplasmic side of the membrane. Residues 347–367 (LVLILVVLIICWGPLLAIMVY) traverse the membrane as a helical segment. At 368–379 (DVFGKMNKLIKT) the chain is on the extracellular side. A helical membrane pass occupies residues 380 to 401 (IFAFCSMLCLLNSTVNPIIYAL). At 402–473 (RSKDLRHAFR…VSTDTTAEAL (72 aa)) the chain is on the cytoplasmic side. Cys-417 is lipidated: S-palmitoyl cysteine.

This sequence belongs to the G-protein coupled receptor 1 family. Post-translationally, palmitoylation at Cys-417 is important for recruitment at both plasma membrane and lipid rafts and association with G protein alpha subunits.

The protein resides in the cell membrane. The protein localises to the mitochondrion outer membrane. Its subcellular location is the cell projection. It is found in the axon. It localises to the presynapse. In terms of biological role, G-protein coupled receptor for cannabinoids. Mediates many cannabinoid-induced effects in the central nervous system (CNS), as well as in peripheral tissues. Regulates cellular respiration and energy production in response to cannabinoids. Signaling typically involves reduction in cyclic AMP. This chain is Cannabinoid receptor 1 (CNR1), found in Taeniopygia guttata (Zebra finch).